We begin with the raw amino-acid sequence, 506 residues long: Peptidyl-prolyl cis-trans isomerase CYP59 (506 aa).

One can recognise a PPIase cyclophilin-type domain in the interval 1–161; that stretch reads MSVLIVTSLG…KNIRIKHTHI (161 aa). The region spanning 243–321 is the RRM domain; that stretch reads NVLFVCKLNP…RRIHVDFSQS (79 aa). The CCHC-type zinc-finger motif lies at 341 to 357; sequence GCFKCGSTDHIAKDCVG. 2 stretches are compositionally biased toward basic and acidic residues: residues 388-404 and 412-506; these read ETPKHNSHERERSEKIQ and GEGK…RRDR. Positions 388-506 are disordered; sequence ETPKHNSHER…REARHERRDR (119 aa).

It belongs to the cyclophilin-type PPIase family. Component of the BZR1 complex. Interacts with NRPB1 (via CTD domain), SCL28, SCL30, SCL30A, SCL33, SC35, SR30, SR34, RSZ21, RS2Z33, RS31 and RS40. Ubiquitous.

The protein localises to the nucleus. It catalyses the reaction [protein]-peptidylproline (omega=180) = [protein]-peptidylproline (omega=0). Its function is as follows. PPIases accelerate the folding of proteins. It catalyzes the cis-trans isomerization of proline imidic peptide bonds in oligopeptides. Influences somehow regulation of RNA pol II (CTD) phosphorylation. Binds RNA with preferences for GC-rich sequences. Probably involved in activities connecting transcription and pre-mRNA processing. Involved in brassinostroid response. In Arabidopsis thaliana (Mouse-ear cress), this protein is Peptidyl-prolyl cis-trans isomerase CYP59 (CYP59).